We begin with the raw amino-acid sequence, 374 residues long: DNA-directed RNA polymerase subunit alpha (374 aa).

An alpha N-terminal domain (alpha-NTD) region spans residues 1–257 (MSDNAHNLLY…KHFSIFENMD (257 aa)). The tract at residues 274 to 374 (KDDILHKLIL…EKIRAKNIKG (101 aa)) is alpha C-terminal domain (alpha-CTD).

It belongs to the RNA polymerase alpha chain family. In terms of assembly, homodimer. The RNAP catalytic core consists of 2 alpha, 1 beta, 1 beta' and 1 omega subunit. When a sigma factor is associated with the core the holoenzyme is formed, which can initiate transcription.

The catalysed reaction is RNA(n) + a ribonucleoside 5'-triphosphate = RNA(n+1) + diphosphate. In terms of biological role, DNA-dependent RNA polymerase catalyzes the transcription of DNA into RNA using the four ribonucleoside triphosphates as substrates. This Chlamydia pneumoniae (Chlamydophila pneumoniae) protein is DNA-directed RNA polymerase subunit alpha.